Consider the following 339-residue polypeptide: DNA-directed RNA polymerase subunit alpha (339 aa).

An alpha N-terminal domain (alpha-NTD) region spans residues 1 to 235 (MVLQKNWQSL…DQLQLFINFD (235 aa)). An alpha C-terminal domain (alpha-CTD) region spans residues 251-339 (FNRNLLRKVD…DLAKRLDETF (89 aa)).

This sequence belongs to the RNA polymerase alpha chain family. As to quaternary structure, homodimer. The RNAP catalytic core consists of 2 alpha, 1 beta, 1 beta' and 1 omega subunit. When a sigma factor is associated with the core the holoenzyme is formed, which can initiate transcription.

The catalysed reaction is RNA(n) + a ribonucleoside 5'-triphosphate = RNA(n+1) + diphosphate. Its function is as follows. DNA-dependent RNA polymerase catalyzes the transcription of DNA into RNA using the four ribonucleoside triphosphates as substrates. This is DNA-directed RNA polymerase subunit alpha from Gluconobacter oxydans (strain 621H) (Gluconobacter suboxydans).